Here is a 198-residue protein sequence, read N- to C-terminus: MICOS complex subunit MIC26 (198 aa).

A signal peptide spans 1-25 (MFKVIQRSVGPASLSLLTFKVYAAP). Residues 108–128 (PGFFPRLGVIGFAGLIGLLLA) form a helical membrane-spanning segment. Serine 162 carries O-linked (Xyl...) (chondroitin sulfate) serine glycosylation.

This sequence belongs to the apolipoprotein O/MICOS complex subunit Mic27 family. As to quaternary structure, component of the mitochondrial contact site and cristae organizing system (MICOS) complex, composed of at least MICOS10/MIC10, CHCHD3/MIC19, CHCHD6/MIC25, APOOL/MIC27, IMMT/MIC60, APOO/MIC23/MIC26 and MICOS13/MIC13. This complex was also known under the names MINOS or MitOS complex. he MICOS complex associates with mitochondrial outer membrane proteins SAMM50, MTX1 and MTX2 (together described as components of the mitochondrial outer membrane sorting assembly machinery (SAM) complex) and DNAJC11, mitochondrial inner membrane protein TMEM11 and with HSPA9. The MICOS and SAM complexes together with DNAJC11 are part of a large protein complex spanning both membranes termed the mitochondrial intermembrane space bridging (MIB) complex. Interacts with IMMT/MIC60. Interacts with MICOS10/MIC10 and APOOL/MIC27. In terms of processing, O-glycosylation; glycosaminoglycan of chondroitin-sulfate type. As to expression, expressed in all tissues examined. Up-regulated in diabetic heart.

The protein resides in the mitochondrion inner membrane. It localises to the secreted. It is found in the mitochondrion. Its subcellular location is the golgi apparatus membrane. The protein localises to the endoplasmic reticulum membrane. Component of the MICOS complex, a large protein complex of the mitochondrial inner membrane that plays crucial roles in the maintenance of crista junctions, inner membrane architecture, and formation of contact sites to the outer membrane. Plays a crucial role in crista junction formation and mitochondrial function. Can promote cardiac lipotoxicity by enhancing mitochondrial respiration and fatty acid metabolism in cardiac myoblasts. Promotes cholesterol efflux from macrophage cells. Detected in HDL, LDL and VLDL. Secreted by a microsomal triglyceride transfer protein (MTTP)-dependent mechanism, probably as a VLDL-associated protein that is subsequently transferred to HDL. This Homo sapiens (Human) protein is MICOS complex subunit MIC26 (APOO).